Here is a 422-residue protein sequence, read N- to C-terminus: Glutamate-1-semialdehyde 2,1-aminomutase (422 aa).

Lys-264 is modified (N6-(pyridoxal phosphate)lysine).

Belongs to the class-III pyridoxal-phosphate-dependent aminotransferase family. HemL subfamily. In terms of assembly, homodimer. Pyridoxal 5'-phosphate is required as a cofactor.

Its subcellular location is the cytoplasm. The enzyme catalyses (S)-4-amino-5-oxopentanoate = 5-aminolevulinate. It functions in the pathway porphyrin-containing compound metabolism; protoporphyrin-IX biosynthesis; 5-aminolevulinate from L-glutamyl-tRNA(Glu): step 2/2. The protein is Glutamate-1-semialdehyde 2,1-aminomutase of Clostridium tetani (strain Massachusetts / E88).